Consider the following 116-residue polypeptide: Large ribosomal subunit protein uL24 (116 aa).

The protein belongs to the universal ribosomal protein uL24 family. As to quaternary structure, part of the 50S ribosomal subunit.

Functionally, one of two assembly initiator proteins, it binds directly to the 5'-end of the 23S rRNA, where it nucleates assembly of the 50S subunit. In terms of biological role, one of the proteins that surrounds the polypeptide exit tunnel on the outside of the subunit. The chain is Large ribosomal subunit protein uL24 from Protochlamydia amoebophila (strain UWE25).